Reading from the N-terminus, the 59-residue chain is uncharacterized protein (59 aa).

This is an uncharacterized protein from Acheta domesticus (House cricket).